The sequence spans 149 residues: Major outer capsid protein (149 aa).

In terms of assembly, homotrimer.

The protein resides in the virion. In terms of biological role, assembles to form an icosahedral capsid with a T=13 symmetry. Drives the penetration of the inner capsid (core) into the cytoplasm. The sequence is that of Major outer capsid protein (P8) from Pseudomonas phage phi6 (Bacteriophage phi-6).